Consider the following 861-residue polypeptide: MKNDNRIIKNTIKQFKEKLCKDFSQKTNITSITRKLAVFIDTILIQLFIKNKLHFGDNFCLLALGSYGRRELQLHSDIDLLILHTEKVSNIQLQRAQKFIQDCWDVGLEVSHQITTVSSCANLASQDLSVISTIMDMFLLCGHGALMEELIYQTHTLHMWPSHQYFFAKLQEQQNRYAKYGETAYNLEPNIKNGPGGLRDLQILLSISKRHFKIKKLAEGIGYGFITDKEYEELKYCQNFLWRVRFALHMLAGKPEERLSFDYQVKLAQFFGYQDQSHILAIEQFMKDYFKVIKRNRELNEMLLQWFNETIVYHQKQKIIRLDDEFQLSNRFIEVRNNRVFKQNPQSILKLFYWLVKRPDIEGVRASTIRLIRESLFLMGKRFRQSKETANIFINIFRTGNDPYDALQRMNRYGVLAHYLDCFATVTGQMQYDLFHAYTVDQHTLFVIRNISRFKKNEYAKQFPLCAKIITALEKPEILYLGALFHDIAKGRGGDHSELGAIEAQQFTQRHYMEAEDSKLIVWLVRYHLLMSQTAQRKDIYDPKTIEQFCQLLPHARYLDYLYLLTVADICGTNPTLWNAWKDSLLKELYHAAKTRLHKQQELLDEAALISIRKQYAMDILISDGISFRVIQDLWGQFKGKYFLHESPEVIARHTKAILNSKQFPVVIIMPHHSQGGTEVFIYMPHKDERFTITTSVLSNHHVTIQEAAIITCDNQFDLDTYIILDENNQAFLNEQRARDIQKSLCDHLANTGRLPAVSRRRLSRALTHFNVKTQINFIDDNTNHQTQLFLVTNDRPGLLATISRVFLTLNIHLHNAKIATAGERVEDMFYISNQTGYSLNHEEKTILKEKLILEISKSKY.

The interval 1 to 321 (MKNDNRIIKN…VYHQKQKIIR (321 aa)) is uridylyltransferase. The interval 322-678 (LDDEFQLSNR…IMPHHSQGGT (357 aa)) is uridylyl-removing. The HD domain maps to 440–562 (VDQHTLFVIR…LPHARYLDYL (123 aa)). ACT domains lie at 679-760 (EVFI…AVSR) and 788-861 (QLFL…KSKY).

This sequence belongs to the GlnD family. The cofactor is Mg(2+).

It carries out the reaction [protein-PII]-L-tyrosine + UTP = [protein-PII]-uridylyl-L-tyrosine + diphosphate. The catalysed reaction is [protein-PII]-uridylyl-L-tyrosine + H2O = [protein-PII]-L-tyrosine + UMP + H(+). With respect to regulation, uridylyltransferase (UTase) activity is inhibited by glutamine, while glutamine activates uridylyl-removing (UR) activity. Its function is as follows. Modifies, by uridylylation and deuridylylation, the PII regulatory proteins (GlnB and homologs), in response to the nitrogen status of the cell that GlnD senses through the glutamine level. Under low glutamine levels, catalyzes the conversion of the PII proteins and UTP to PII-UMP and PPi, while under higher glutamine levels, GlnD hydrolyzes PII-UMP to PII and UMP (deuridylylation). Thus, controls uridylylation state and activity of the PII proteins, and plays an important role in the regulation of nitrogen assimilation and metabolism. In Legionella pneumophila subsp. pneumophila (strain Philadelphia 1 / ATCC 33152 / DSM 7513), this protein is Bifunctional uridylyltransferase/uridylyl-removing enzyme.